Reading from the N-terminus, the 396-residue chain is Activity-regulated cytoskeleton-associated protein (396 aa).

Positions 54–78 form a coiled coil; sequence SKQVERELKGLHRSVGKLENNLDGY. The interaction with SH3GL1 or SH3GL3 stretch occupies residues 89-100; the sequence is KSIKACLCRCQE. Residues 177–207 form a disordered region; it reads PPAAGELPEQESVEAQQYQSWGPGEDGQPSP. The interaction with DNM2 stretch occupies residues 195–214; it reads QSWGPGEDGQPSPGVDTQIF. Ser-260 is modified (phosphoserine; by CaMK2). Residues Lys-268 and Lys-269 each participate in a glycyl lysine isopeptide (Lys-Gly) (interchain with G-Cter in ubiquitin) cross-link. At Thr-278 the chain carries Phosphothreonine. Positions 356-396 are disordered; it reads QDGLEQAAEPSGTPLPTEDETEALTPALTSESVASDRTQPE. Residues 382–396 are compositionally biased toward polar residues; it reads ALTSESVASDRTQPE.

This sequence belongs to the ARC/ARG3.1 family. As to quaternary structure, homooligomer; homooligomerizes into virion-like capsids. Interacts with SH3GL1/endophilin-2, SH3GL3/endophilin-3 and DNM2/DYN2. Interacts with CAMK2B (in the kinase inactive state); leading to target ARC to inactive synapses. Interacts with PSEN1. Interacts with GRIN2A and GRIN2B; inhibiting homooligomerization. Ubiquitinated by UBE3A, leading to its degradation by the proteasome, thereby promoting AMPA receptors (AMPARs) expression at synapses. Ubiquitinated by RNF216 at Lys-268 and Lys-269 limiting ARC protein levels induced by synaptic activity and thus regulating ARC-dependent forms of synaptic plasticity. Post-translationally, palmitoylation anchors the protein into the membrane by allowing direct insertion into the hydrophobic core of the lipid bilayer. In terms of processing, phosphorylation at Ser-260 by CaMK2 prevents homooligomerization into virion-like capsids by disrupting an interaction surface essential for high-order oligomerization. Phosphorylation by CaMK2 inhibits synaptic activity. As to expression, expressed in brain and testis. In primary visual cortex, detected in all cortical layers with the exception of layer 5: present at highest level in layers 2/3 and 4, the predominant sites of ocular dominance plasticity (at protein level). Also expressed in skin-migratory dendritic cells.

The protein resides in the extracellular vesicle membrane. It is found in the postsynaptic cell membrane. It localises to the synapse. Its subcellular location is the postsynaptic density. The protein localises to the early endosome membrane. The protein resides in the cell projection. It is found in the dendrite. It localises to the cytoplasm. Its subcellular location is the cytoskeleton. The protein localises to the cell cortex. The protein resides in the dendritic spine. It is found in the cytoplasmic vesicle. It localises to the secretory vesicle. Its subcellular location is the acrosome. The protein localises to the clathrin-coated vesicle membrane. In terms of biological role, master regulator of synaptic plasticity that self-assembles into virion-like capsids that encapsulate RNAs and mediate intercellular RNA transfer in the nervous system. ARC protein is released from neurons in extracellular vesicles that mediate the transfer of ARC mRNA into new target cells, where ARC mRNA can undergo activity-dependent translation. ARC capsids are endocytosed and are able to transfer ARC mRNA into the cytoplasm of neurons. Acts as a key regulator of synaptic plasticity: required for protein synthesis-dependent forms of long-term potentiation (LTP) and depression (LTD) and for the formation of long-term memory. Regulates synaptic plasticity by promoting endocytosis of AMPA receptors (AMPARs) in response to synaptic activity: this endocytic pathway maintains levels of surface AMPARs in response to chronic changes in neuronal activity through synaptic scaling, thereby contributing to neuronal homeostasis. Acts as a postsynaptic mediator of activity-dependent synapse elimination in the developing cerebellum by mediating elimination of surplus climbing fiber synapses. Accumulates at weaker synapses, probably to prevent their undesired enhancement. This suggests that ARC-containing virion-like capsids may be required to eliminate synaptic material. Required to transduce experience into long-lasting changes in visual cortex plasticity and for long-term memory. Involved in postsynaptic trafficking and processing of amyloid-beta A4 (APP) via interaction with PSEN1. In addition to its role in synapses, also involved in the regulation of the immune system: specifically expressed in skin-migratory dendritic cells and regulates fast dendritic cell migration, thereby regulating T-cell activation. This is Activity-regulated cytoskeleton-associated protein from Mus musculus (Mouse).